Here is a 234-residue protein sequence, read N- to C-terminus: 2-C-methyl-D-erythritol 4-phosphate cytidylyltransferase (234 aa).

It belongs to the IspD/TarI cytidylyltransferase family. IspD subfamily.

The catalysed reaction is 2-C-methyl-D-erythritol 4-phosphate + CTP + H(+) = 4-CDP-2-C-methyl-D-erythritol + diphosphate. It participates in isoprenoid biosynthesis; isopentenyl diphosphate biosynthesis via DXP pathway; isopentenyl diphosphate from 1-deoxy-D-xylulose 5-phosphate: step 2/6. In terms of biological role, catalyzes the formation of 4-diphosphocytidyl-2-C-methyl-D-erythritol from CTP and 2-C-methyl-D-erythritol 4-phosphate (MEP). This is 2-C-methyl-D-erythritol 4-phosphate cytidylyltransferase from Shewanella sediminis (strain HAW-EB3).